Here is a 105-residue protein sequence, read N- to C-terminus: Cell division protein FtsB (105 aa).

Over 1–3 (MGK) the chain is Cytoplasmic. The helical transmembrane segment at 4–21 (LTLLLLALLVWLQYSLWF) threads the bilayer. Over 22–105 (GKNGLHDYTR…QASGQQQNNR (84 aa)) the chain is Periplasmic. Positions 33–62 (NDDVTAQQATNAKLKARNDQLFAEIDDLNG) form a coiled coil.

Belongs to the FtsB family. In terms of assembly, part of a complex composed of FtsB, FtsL and FtsQ.

Its subcellular location is the cell inner membrane. Its function is as follows. Essential cell division protein. May link together the upstream cell division proteins, which are predominantly cytoplasmic, with the downstream cell division proteins, which are predominantly periplasmic. In Klebsiella aerogenes (Enterobacter aerogenes), this protein is Cell division protein FtsB.